The primary structure comprises 507 residues: MFS-type transporter acdC (507 aa).

The disordered stretch occupies residues 1-50 (MSPNAPAVDIGAAPSLDTPEGDTKQPAEDHVEKDSNLVDWDGPDDPEHPQ). The span at 21–36 (GDTKQPAEDHVEKDSN) shows a compositional bias: basic and acidic residues. An N-linked (GlcNAc...) asparagine glycan is attached at Asn-51. Residues 58–78 (WGITFSLASMTMWITFSSSVL) form a helical membrane-spanning segment. An N-linked (GlcNAc...) asparagine glycan is attached at Asn-90. 5 helical membrane passes run 95–115 (VMPLATTLVIFGFALGPLCWA), 125–145 (LPTFLGYGVFAIFQVPVAVAP), 155–175 (FFVGVFGSSALSVGPGVMADI), 186–206 (PFFFAANLLGPILGPIIGGFI), and 215–235 (WTAWLTLITSIFFGVLALLIV). N-linked (GlcNAc...) asparagine glycosylation occurs at Asn-257. A run of 6 helical transmembrane segments spans residues 290–310 (PILICFTVYLSLIYGILYLFL), 328–348 (IAGLPFLGILVGMVLGIGIII), 371–391 (LVEMMLTSITMPIGLFWFGWA), 395–415 (HWMVQTIAGVPLGIGLFVLFM), 442–462 (FLGGSFPLFATAMYHNLGVDW), and 466–486 (ILGFISVAMVPIPFAFYIFGA).

Belongs to the major facilitator superfamily. CAR1 family.

It is found in the membrane. Functionally, MFS-type transporter; part of the gene cluster that mediates the biosynthesis of aspcandine, a pyrrolobenzazepine alkaloid. The protein is MFS-type transporter acdC of Aspergillus candidus.